Consider the following 884-residue polypeptide: Alanine--tRNA ligase (884 aa).

Residues H565, H569, C672, and H676 each contribute to the Zn(2+) site.

The protein belongs to the class-II aminoacyl-tRNA synthetase family. It depends on Zn(2+) as a cofactor.

It is found in the cytoplasm. The catalysed reaction is tRNA(Ala) + L-alanine + ATP = L-alanyl-tRNA(Ala) + AMP + diphosphate. Catalyzes the attachment of alanine to tRNA(Ala) in a two-step reaction: alanine is first activated by ATP to form Ala-AMP and then transferred to the acceptor end of tRNA(Ala). Also edits incorrectly charged Ser-tRNA(Ala) and Gly-tRNA(Ala) via its editing domain. The protein is Alanine--tRNA ligase of Sphingopyxis alaskensis (strain DSM 13593 / LMG 18877 / RB2256) (Sphingomonas alaskensis).